Reading from the N-terminus, the 84-residue chain is uncharacterized protein (84 aa).

This is an uncharacterized protein from Methanocaldococcus jannaschii (strain ATCC 43067 / DSM 2661 / JAL-1 / JCM 10045 / NBRC 100440) (Methanococcus jannaschii).